A 199-amino-acid polypeptide reads, in one-letter code: Probable GTP-binding protein EngB (199 aa).

Residues 28-199 (DLPEIALAGR…DSWDAILEQV (172 aa)) form the EngB-type G domain. Residues 36–43 (GRSNVGKS), 63–67 (GKTQL), 81–84 (DVPG), 148–151 (TKAD), and 180–182 (FSS) contribute to the GTP site. Residues S43 and T65 each coordinate Mg(2+).

The protein belongs to the TRAFAC class TrmE-Era-EngA-EngB-Septin-like GTPase superfamily. EngB GTPase family. The cofactor is Mg(2+).

Necessary for normal cell division and for the maintenance of normal septation. The polypeptide is Probable GTP-binding protein EngB (Streptococcus pyogenes serotype M1).